Here is a 398-residue protein sequence, read N- to C-terminus: Phospholipase C (398 aa).

The N-terminal stretch at 1–28 (MKRKICKALICAALATSLWAGASTKVYA) is a signal peptide. Residues Trp-29, His-39, Asp-84, His-96, His-154, Asp-158, His-164, His-176, and Glu-180 each contribute to the Zn(2+) site. In terms of domain architecture, Zn-dependent PLC spans 29–278 (WDGKIDGTGT…HDVSEGNDPS (250 aa)). Residues 275–283 (NDPSVGKNV) form a linker region. Residues 284 to 398 (KELVAYISTS…ISGNSTYNIK (115 aa)) form the PLAT domain. Ca(2+) contacts are provided by Asp-297, Gly-299, Thr-300, Asp-301, Asp-321, Asn-322, Gly-324, Asn-325, Asp-326, Asp-364, and Ala-365.

This sequence belongs to the bacterial zinc-metallophospholipase C family. Ca(2+) serves as cofactor. Zn(2+) is required as a cofactor.

The protein localises to the secreted. The catalysed reaction is a 1,2-diacyl-sn-glycero-3-phosphocholine + H2O = phosphocholine + a 1,2-diacyl-sn-glycerol + H(+). In terms of biological role, bacterial hemolysins are exotoxins that attack blood cell membranes and cause cell rupture. Constitutes an essential virulence factor in gas gangrene. Binds to eukaryotic membranes where it hydrolyzes both phosphatidylcholine and sphingomyelin. The diacylglycerol produced can activate both the arachidonic acid pathway, leading to modulation of the inflammatory response cascade and thrombosis, and protein kinase C, leading to activation of eukaryotic phospholipases and further membrane damage. Acts on human and mouse erythrocytes, but not on rabbit or horse erythrocytes. This is Phospholipase C (plc) from Clostridium perfringens (strain ATCC 13124 / DSM 756 / JCM 1290 / NCIMB 6125 / NCTC 8237 / Type A).